The chain runs to 175 residues: CASP-like protein 2C1 (175 aa).

Residues 1–7 are Cytoplasmic-facing; sequence MVKLRET. The helical transmembrane segment at 8 to 28 threads the bilayer; it reads EVILRLCIVFFLLLTSCLIGL. Residues 29–45 are Extracellular-facing; that stretch reads DSQTKEIAYIHKNVSFR. N-linked (GlcNAc...) asparagine glycosylation occurs at asparagine 41. Residues 46–66 form a helical membrane-spanning segment; sequence YLLALEAELYIDVVVAAYNLV. Over 67 to 91 the chain is Cytoplasmic; it reads QLGLGWYNVEQKTSNPKWFSYLLDQ. Residues 92–112 traverse the membrane as a helical segment; sequence TAAYVVFAGTSAAAQHSLLVV. The Extracellular portion of the chain corresponds to 113–136; it reads TGSRELQWMKWCYKFTRFCFQMGS. A helical transmembrane segment spans residues 137-157; it reads AIILNYIAAALMVLLSSISAF. At 158–175 the chain is on the cytoplasmic side; sequence NLFRLYSPKRFFRFKSSS.

Belongs to the Casparian strip membrane proteins (CASP) family. As to quaternary structure, homodimer and heterodimers.

Its subcellular location is the cell membrane. This chain is CASP-like protein 2C1, found in Arabidopsis thaliana (Mouse-ear cress).